The following is a 371-amino-acid chain: Dual-specificity RNA methyltransferase RlmN (371 aa).

Residue Glu97 is the Proton acceptor of the active site. The Radical SAM core domain occupies 103 to 341 (DGDRATLCVS…VTVRTTRGDD (239 aa)). Cysteines 110 and 346 form a disulfide. The [4Fe-4S] cluster site is built by Cys117, Cys121, and Cys124. S-adenosyl-L-methionine is bound by residues 171 to 172 (GE), Ser203, 225 to 227 (SLH), and Asn303. The active-site S-methylcysteine intermediate is the Cys346.

The protein belongs to the radical SAM superfamily. RlmN family. Requires [4Fe-4S] cluster as cofactor.

It is found in the cytoplasm. The catalysed reaction is adenosine(2503) in 23S rRNA + 2 reduced [2Fe-2S]-[ferredoxin] + 2 S-adenosyl-L-methionine = 2-methyladenosine(2503) in 23S rRNA + 5'-deoxyadenosine + L-methionine + 2 oxidized [2Fe-2S]-[ferredoxin] + S-adenosyl-L-homocysteine. It carries out the reaction adenosine(37) in tRNA + 2 reduced [2Fe-2S]-[ferredoxin] + 2 S-adenosyl-L-methionine = 2-methyladenosine(37) in tRNA + 5'-deoxyadenosine + L-methionine + 2 oxidized [2Fe-2S]-[ferredoxin] + S-adenosyl-L-homocysteine. In terms of biological role, specifically methylates position 2 of adenine 2503 in 23S rRNA and position 2 of adenine 37 in tRNAs. m2A2503 modification seems to play a crucial role in the proofreading step occurring at the peptidyl transferase center and thus would serve to optimize ribosomal fidelity. This is Dual-specificity RNA methyltransferase RlmN from Marinomonas sp. (strain MWYL1).